We begin with the raw amino-acid sequence, 218 residues long: MSAPLTLALSKGRIFEETVPLLAAAGVTVAEDPETSRKLILPTTDPNLRVIVVRATDVPTYVEYGAADFGVAGKDVLLEHGGGGLYQPIDLNIARCRMSVAVPAGFDYANAVRQGARLRVATKYVETAREHFAAKGVHVDLIKLYGSMELAPLVGLADAIVDLVSSGGTLKANNLVEVEEIMPISSRLVVNQAALKLKRAALKPFLDAFERASLGSGA.

This sequence belongs to the ATP phosphoribosyltransferase family. Short subfamily. Heteromultimer composed of HisG and HisZ subunits.

It localises to the cytoplasm. The enzyme catalyses 1-(5-phospho-beta-D-ribosyl)-ATP + diphosphate = 5-phospho-alpha-D-ribose 1-diphosphate + ATP. Its pathway is amino-acid biosynthesis; L-histidine biosynthesis; L-histidine from 5-phospho-alpha-D-ribose 1-diphosphate: step 1/9. Catalyzes the condensation of ATP and 5-phosphoribose 1-diphosphate to form N'-(5'-phosphoribosyl)-ATP (PR-ATP). Has a crucial role in the pathway because the rate of histidine biosynthesis seems to be controlled primarily by regulation of HisG enzymatic activity. The polypeptide is ATP phosphoribosyltransferase (Burkholderia mallei (strain ATCC 23344)).